Reading from the N-terminus, the 364-residue chain is tRNA N6-adenosine threonylcarbamoyltransferase (364 aa).

H115 and H119 together coordinate Fe cation. Substrate-binding positions include 137 to 141 (LVSGG), D170, G183, and N288. D316 provides a ligand contact to Fe cation. The interval 341–364 (PRSRWPLDEKSAPLIGTGRRGTKA) is disordered.

The protein belongs to the KAE1 / TsaD family. Requires Fe(2+) as cofactor.

The protein resides in the cytoplasm. It carries out the reaction L-threonylcarbamoyladenylate + adenosine(37) in tRNA = N(6)-L-threonylcarbamoyladenosine(37) in tRNA + AMP + H(+). Its function is as follows. Required for the formation of a threonylcarbamoyl group on adenosine at position 37 (t(6)A37) in tRNAs that read codons beginning with adenine. Is involved in the transfer of the threonylcarbamoyl moiety of threonylcarbamoyl-AMP (TC-AMP) to the N6 group of A37, together with TsaE and TsaB. TsaD likely plays a direct catalytic role in this reaction. This chain is tRNA N6-adenosine threonylcarbamoyltransferase, found in Bartonella henselae (strain ATCC 49882 / DSM 28221 / CCUG 30454 / Houston 1) (Rochalimaea henselae).